The chain runs to 227 residues: MIVTIDGPAGSGKSTTAQRAAARLEYVYLDTGAMYRAVALGFLRAEAPATRSGAEAVLPSLTVDVEYRGDTMQVFLGDDAVTDRIRSAEVGRVVSDISTLAPVREYMVEQQRRIGRAQADRHGGVVLDGRDTGTVVFPKAPVKIFMVADIDERARRRLQEYEAAGEEVTFEEVRAEIEQRDQQDRTRDIAPLRRADDAIVFDTTDCTIAEQVDFVVDRVKAQDGRGT.

ATP is bound at residue G7 to T15.

Belongs to the cytidylate kinase family. Type 1 subfamily.

The protein localises to the cytoplasm. It carries out the reaction CMP + ATP = CDP + ADP. It catalyses the reaction dCMP + ATP = dCDP + ADP. In Salinibacter ruber (strain DSM 13855 / M31), this protein is Cytidylate kinase.